Consider the following 255-residue polypeptide: 3-oxoacyl-[acyl-carrier-protein] reductase MabA (255 aa).

Residues 32 to 35 (NRGI), arginine 55, 69 to 70 (DV), glycine 98, tyrosine 161, lysine 165, isoleucine 194, and arginine 205 each bind NADP(+). Tyrosine 161 functions as the Proton acceptor in the catalytic mechanism.

It belongs to the short-chain dehydrogenases/reductases (SDR) family. As to quaternary structure, homotetramer.

The protein localises to the secreted. It is found in the cell wall. The catalysed reaction is a (3R)-hydroxyacyl-[ACP] + NADP(+) = a 3-oxoacyl-[ACP] + NADPH + H(+). It carries out the reaction a (3R)-3-hydroxyacyl-CoA + NADP(+) = a 3-oxoacyl-CoA + NADPH + H(+). The enzyme catalyses (3R)-3-hydroxybutanoyl-CoA + NADP(+) = acetoacetyl-CoA + NADPH + H(+). It catalyses the reaction (3R)-hydroxyoctanoyl-CoA + NADP(+) = 3-oxooctanoyl-CoA + NADPH + H(+). The protein operates within lipid metabolism; mycolic acid biosynthesis. Its function is as follows. Part of the mycobacterial fatty acid elongation system FAS-II, which is involved in mycolic acid biosynthesis. Catalyzes the NADPH-dependent reduction of beta-ketoacyl derivatives, the second step of the FAS-II elongation cycle. Has a preference for longer substrates. Can use CoA derivatives as substrates in vitro. This Mycolicibacterium smegmatis (strain ATCC 700084 / mc(2)155) (Mycobacterium smegmatis) protein is 3-oxoacyl-[acyl-carrier-protein] reductase MabA.